The following is a 242-amino-acid chain: Segregation and condensation protein A (242 aa).

It belongs to the ScpA family. Component of a cohesin-like complex composed of ScpA, ScpB and the Smc homodimer, in which ScpA and ScpB bind to the head domain of Smc. The presence of the three proteins is required for the association of the complex with DNA.

Its subcellular location is the cytoplasm. Its function is as follows. Participates in chromosomal partition during cell division. May act via the formation of a condensin-like complex containing Smc and ScpB that pull DNA away from mid-cell into both cell halves. The polypeptide is Segregation and condensation protein A (Streptococcus pneumoniae serotype 19F (strain G54)).